Consider the following 156-residue polypeptide: ATP synthase subunit b (156 aa).

A helical transmembrane segment spans residues 11–31; the sequence is AIAFVLFVLFCMKYIWPPIMA.

The protein belongs to the ATPase B chain family. In terms of assembly, F-type ATPases have 2 components, F(1) - the catalytic core - and F(0) - the membrane proton channel. F(1) has five subunits: alpha(3), beta(3), gamma(1), delta(1), epsilon(1). F(0) has three main subunits: a(1), b(2) and c(10-14). The alpha and beta chains form an alternating ring which encloses part of the gamma chain. F(1) is attached to F(0) by a central stalk formed by the gamma and epsilon chains, while a peripheral stalk is formed by the delta and b chains.

It localises to the cell inner membrane. In terms of biological role, f(1)F(0) ATP synthase produces ATP from ADP in the presence of a proton or sodium gradient. F-type ATPases consist of two structural domains, F(1) containing the extramembraneous catalytic core and F(0) containing the membrane proton channel, linked together by a central stalk and a peripheral stalk. During catalysis, ATP synthesis in the catalytic domain of F(1) is coupled via a rotary mechanism of the central stalk subunits to proton translocation. Component of the F(0) channel, it forms part of the peripheral stalk, linking F(1) to F(0). The chain is ATP synthase subunit b from Yersinia enterocolitica serotype O:8 / biotype 1B (strain NCTC 13174 / 8081).